A 94-amino-acid chain; its full sequence is Large ribosomal subunit protein bL25 (94 aa).

The protein belongs to the bacterial ribosomal protein bL25 family. In terms of assembly, part of the 50S ribosomal subunit; part of the 5S rRNA/L5/L18/L25 subcomplex. Contacts the 5S rRNA. Binds to the 5S rRNA independently of L5 and L18.

Functionally, this is one of the proteins that binds to the 5S RNA in the ribosome where it forms part of the central protuberance. The chain is Large ribosomal subunit protein bL25 from Salmonella gallinarum (strain 287/91 / NCTC 13346).